Consider the following 22-residue polypeptide: thr operon leader peptide (22 aa).

Belongs to the thr operon leader peptide family.

In terms of biological role, this protein is involved in control of the biosynthesis of threonine. This is thr operon leader peptide from Klebsiella pneumoniae (strain 342).